We begin with the raw amino-acid sequence, 293 residues long: 4-diphosphocytidyl-2-C-methyl-D-erythritol kinase (293 aa).

Lys16 is a catalytic residue. 99–109 (PMGAGLGGGSS) contacts ATP. Asp141 is a catalytic residue.

It belongs to the GHMP kinase family. IspE subfamily.

It carries out the reaction 4-CDP-2-C-methyl-D-erythritol + ATP = 4-CDP-2-C-methyl-D-erythritol 2-phosphate + ADP + H(+). It participates in isoprenoid biosynthesis; isopentenyl diphosphate biosynthesis via DXP pathway; isopentenyl diphosphate from 1-deoxy-D-xylulose 5-phosphate: step 3/6. Functionally, catalyzes the phosphorylation of the position 2 hydroxy group of 4-diphosphocytidyl-2C-methyl-D-erythritol. The chain is 4-diphosphocytidyl-2-C-methyl-D-erythritol kinase from Burkholderia ambifaria (strain MC40-6).